Reading from the N-terminus, the 357-residue chain is Peptide chain release factor 1 (357 aa).

Gln232 carries the post-translational modification N5-methylglutamine. Basic and acidic residues predominate over residues Lys282–Arg291. Positions Lys282–Glu302 are disordered.

It belongs to the prokaryotic/mitochondrial release factor family. Post-translationally, methylated by PrmC. Methylation increases the termination efficiency of RF1.

It is found in the cytoplasm. In terms of biological role, peptide chain release factor 1 directs the termination of translation in response to the peptide chain termination codons UAG and UAA. This Solidesulfovibrio magneticus (strain ATCC 700980 / DSM 13731 / RS-1) (Desulfovibrio magneticus) protein is Peptide chain release factor 1.